We begin with the raw amino-acid sequence, 390 residues long: Succinate--CoA ligase [ADP-forming] subunit beta (390 aa).

The ATP-grasp domain maps to 9–244 (KEIFREYGVP…LSEEDPVEVE (236 aa)). ATP contacts are provided by residues Lys46, 53 to 55 (GRG), Glu99, Ala102, and Glu107. Residues Asn199 and Asp213 each coordinate Mg(2+). Residues Asn264 and 321–323 (GIV) each bind substrate.

It belongs to the succinate/malate CoA ligase beta subunit family. In terms of assembly, heterotetramer of two alpha and two beta subunits. The cofactor is Mg(2+).

It catalyses the reaction succinate + ATP + CoA = succinyl-CoA + ADP + phosphate. It carries out the reaction GTP + succinate + CoA = succinyl-CoA + GDP + phosphate. The protein operates within carbohydrate metabolism; tricarboxylic acid cycle; succinate from succinyl-CoA (ligase route): step 1/1. In terms of biological role, succinyl-CoA synthetase functions in the citric acid cycle (TCA), coupling the hydrolysis of succinyl-CoA to the synthesis of either ATP or GTP and thus represents the only step of substrate-level phosphorylation in the TCA. The beta subunit provides nucleotide specificity of the enzyme and binds the substrate succinate, while the binding sites for coenzyme A and phosphate are found in the alpha subunit. The chain is Succinate--CoA ligase [ADP-forming] subunit beta from Nitratiruptor sp. (strain SB155-2).